The following is a 156-amino-acid chain: Small ribosomal subunit protein uS7 (156 aa).

The protein belongs to the universal ribosomal protein uS7 family. In terms of assembly, part of the 30S ribosomal subunit. Contacts proteins S9 and S11.

In terms of biological role, one of the primary rRNA binding proteins, it binds directly to 16S rRNA where it nucleates assembly of the head domain of the 30S subunit. Is located at the subunit interface close to the decoding center, probably blocks exit of the E-site tRNA. The protein is Small ribosomal subunit protein uS7 of Chromobacterium violaceum (strain ATCC 12472 / DSM 30191 / JCM 1249 / CCUG 213 / NBRC 12614 / NCIMB 9131 / NCTC 9757 / MK).